Reading from the N-terminus, the 160-residue chain is Large ribosomal subunit protein uL22c (160 aa).

This sequence belongs to the universal ribosomal protein uL22 family. In terms of assembly, part of the 50S ribosomal subunit.

It localises to the plastid. The protein resides in the chloroplast. In terms of biological role, this protein binds specifically to 23S rRNA. Its function is as follows. The globular domain of the protein is located near the polypeptide exit tunnel on the outside of the subunit, while an extended beta-hairpin is found that lines the wall of the exit tunnel in the center of the 70S ribosome. This Panax ginseng (Korean ginseng) protein is Large ribosomal subunit protein uL22c (rpl22).